Reading from the N-terminus, the 448-residue chain is Tryptamine benzoyltransferase 2 (448 aa).

A disordered region spans residues 1 to 20; sequence MEITSSAMLKPAPTPTPHPL. Residues His155 and Asp386 each act as proton acceptor in the active site.

This sequence belongs to the plant acyltransferase family.

Its function is as follows. Hydroxycinnamoyl transferase that catalyzes the transfer of an acyl from benzoyl-CoA to tryptamine, to produce benzoyl tryptamine. Serotonin and tyramine serve as acyl acceptors in vitro. Specific for benzoyl-CoA as acyl donor. Has no activity with p-coumaroyl-CoA, caffeoyl-CoA, or feruloyl-CoA as acyl donors. The chain is Tryptamine benzoyltransferase 2 from Oryza sativa subsp. japonica (Rice).